A 331-amino-acid polypeptide reads, in one-letter code: UPF0194 membrane protein YbhG (331 aa).

The signal sequence occupies residues 1 to 19 (MKKPVVIGLAIAAIVAVIA). A coiled-coil region spans residues 107 to 208 (EEIAQAAAAV…LDLQDTTLIA (102 aa)).

It belongs to the UPF0194 family.

It localises to the periplasm. The protein is UPF0194 membrane protein YbhG of Salmonella agona (strain SL483).